Consider the following 256-residue polypeptide: uncharacterized protein (256 aa).

Belongs to the methyltransferase superfamily.

The protein resides in the cytoplasm. Its subcellular location is the nucleus. Probable methyltransferase. This is an uncharacterized protein from Schizosaccharomyces pombe (strain 972 / ATCC 24843) (Fission yeast).